The following is a 234-amino-acid chain: uncharacterized protein (234 aa).

L-glutamine is bound at residue 68-70 (GES). The active-site Nucleophile is the Cys101. L-glutamine is bound by residues Arg131 and 167 to 168 (IR). Catalysis depends on charge relay system residues His208 and Glu210.

The protein belongs to the glutaminase PdxT/SNO family.

It localises to the cytoplasm. The catalysed reaction is L-glutamine + H2O = L-glutamate + NH4(+). This is an uncharacterized protein from Schizosaccharomyces pombe (strain 972 / ATCC 24843) (Fission yeast).